Consider the following 341-residue polypeptide: HTH-type transcriptional repressor CytR (341 aa).

The 55-residue stretch at 10–64 folds into the HTH lacI-type domain; sequence ATMKDVALKAKVSTATVSRALMNPDKVSQATRNRVEKAAREVGYLPQPMGRNVKR. Residues 12 to 31 constitute a DNA-binding region (H-T-H motif); sequence MKDVALKAKVSTATVSRALM.

In terms of biological role, this protein negatively controls the transcription initiation of genes such as deoCABD, udp, and cdd encoding catabolizing enzymes and nupC, nupG, and tsx encoding transporting and pore-forming proteins. Binds cytidine and adenosine as effectors. The protein is HTH-type transcriptional repressor CytR (cytR) of Escherichia coli (strain K12).